Consider the following 233-residue polypeptide: Defense protein 3 (233 aa).

The first 17 residues, 1 to 17 (MFGKFVLLAVLLVGVNS), serve as a signal peptide directing secretion. The propeptide occupies 18–45 (RYVIIEDPVYYIEDHELPEQWTSSRVRR).

The protein belongs to the attacin/sarcotoxin-2 family.

It localises to the secreted. Functionally, has antibacterial activity against both Gram-positive and Gram-negative bacteria. The protein is Defense protein 3 of Lonomia obliqua (Moth).